A 310-amino-acid polypeptide reads, in one-letter code: Malate dehydrogenase (310 aa).

NAD(+) is bound by residues 7–13 and D34; that span reads GAAGGIG. R81 and R87 together coordinate substrate. Residues N94 and 117 to 119 contribute to the NAD(+) site; that span reads ITN. Residues N119 and R153 each contribute to the substrate site. H177 acts as the Proton acceptor in catalysis. Position 227 (M227) interacts with NAD(+).

It belongs to the LDH/MDH superfamily. MDH type 1 family. As to quaternary structure, homodimer.

The catalysed reaction is (S)-malate + NAD(+) = oxaloacetate + NADH + H(+). Catalyzes the reversible oxidation of malate to oxaloacetate. This Vibrio vulnificus (strain CMCP6) protein is Malate dehydrogenase.